Reading from the N-terminus, the 796-residue chain is AUGMIN subunit 5 (796 aa).

The segment at 79 to 120 (HGGSSNASIGSSVNPGKEESKSKGRRKDKTVTGESSSYAEDR) is disordered. Residues 80–92 (GGSSNASIGSSVN) show a composition bias toward polar residues. Coiled coils occupy residues 115–191 (SYAE…EATR) and 462–501 (GKER…LKKK).

Belongs to the HAUS5 family. As to quaternary structure, part of the augmin complex composed of 8 subunits. The complex acts on microtubules and interacts with gamma-tubulin in spindles and the phragmoplast.

The protein resides in the cytoplasm. It is found in the cytoskeleton. Its subcellular location is the spindle. It localises to the phragmoplast. Functionally, involved in microtubules reorganization during spindle and phragmoplast development. This is AUGMIN subunit 5 from Arabidopsis thaliana (Mouse-ear cress).